The primary structure comprises 229 residues: Protein FMP52-2, mitochondrial (229 aa).

The N-terminal 45 residues, 1–45 (MAAGAFILGSTGLCGYQMLRFAEKSSLFDKISTVGRKLPDFKSEK), are a transit peptide targeting the mitochondrion.

This sequence belongs to the FMP52 family.

It localises to the mitochondrion outer membrane. This Scheffersomyces stipitis (strain ATCC 58785 / CBS 6054 / NBRC 10063 / NRRL Y-11545) (Yeast) protein is Protein FMP52-2, mitochondrial (FMP522).